Reading from the N-terminus, the 229-residue chain is 2-C-methyl-D-erythritol 4-phosphate cytidylyltransferase (229 aa).

It belongs to the IspD/TarI cytidylyltransferase family. IspD subfamily.

The enzyme catalyses 2-C-methyl-D-erythritol 4-phosphate + CTP + H(+) = 4-CDP-2-C-methyl-D-erythritol + diphosphate. The protein operates within isoprenoid biosynthesis; isopentenyl diphosphate biosynthesis via DXP pathway; isopentenyl diphosphate from 1-deoxy-D-xylulose 5-phosphate: step 2/6. Functionally, catalyzes the formation of 4-diphosphocytidyl-2-C-methyl-D-erythritol from CTP and 2-C-methyl-D-erythritol 4-phosphate (MEP). This chain is 2-C-methyl-D-erythritol 4-phosphate cytidylyltransferase, found in Clostridium botulinum (strain Langeland / NCTC 10281 / Type F).